A 1359-amino-acid polypeptide reads, in one-letter code: Tripeptidyl-peptidase 2 (1359 aa).

A disordered region spans residues 45–81 (AASTTTRGGPSPSAGVAPRAMPSSSSSPPSAAEGTTA). A compositionally biased stretch (low complexity) spans 64–81 (AMPSSSSSPPSAAEGTTA). The 499-residue stretch at 102-600 (EIGVDRFLAA…HGLLQVDRAF (499 aa)) folds into the Peptidase S8 domain. Residues aspartate 126, histidine 353, and serine 539 each act as charge relay system in the active site.

This sequence belongs to the peptidase S8 family.

The enzyme catalyses Release of an N-terminal tripeptide from a polypeptide.. Its function is as follows. Serine protease that may function in the proteasome pathway. This is Tripeptidyl-peptidase 2 (TPP2) from Oryza sativa subsp. japonica (Rice).